A 202-amino-acid polypeptide reads, in one-letter code: Ribonuclease HII (202 aa).

In terms of domain architecture, RNase H type-2 spans 15 to 202 (QGVAGVDEAG…APIKAFGISA (188 aa)). 3 residues coordinate a divalent metal cation: D21, E22, and D113.

Belongs to the RNase HII family. Mn(2+) serves as cofactor. Mg(2+) is required as a cofactor.

The protein resides in the cytoplasm. The catalysed reaction is Endonucleolytic cleavage to 5'-phosphomonoester.. Endonuclease that specifically degrades the RNA of RNA-DNA hybrids. The protein is Ribonuclease HII of Bordetella avium (strain 197N).